Reading from the N-terminus, the 29-residue chain is Cyclotide vibi-B (29 aa).

A cross-link (cyclopeptide (Gly-Asn)) is located at residues 1–29 (GLPVCGETCFGGTCNTPGCTCSYPICTRN). 3 disulfide bridges follow: cysteine 5-cysteine 19, cysteine 9-cysteine 21, and cysteine 14-cysteine 26.

Post-translationally, this is a cyclic peptide.

In terms of biological role, probably participates in a plant defense mechanism. The protein is Cyclotide vibi-B of Viola biflora (Yellow wood violet).